Here is a 402-residue protein sequence, read N- to C-terminus: Acetate kinase (402 aa).

Position 10 (asparagine 10) interacts with Mg(2+). Lysine 17 is a binding site for ATP. Position 89 (arginine 89) interacts with substrate. Aspartate 148 acts as the Proton donor/acceptor in catalysis. ATP-binding positions include 208–212, 283–285, and 334–338; these read HLGNG, DCR, and GIGEN. Glutamate 389 is a binding site for Mg(2+).

It belongs to the acetokinase family. In terms of assembly, homodimer. Requires Mg(2+) as cofactor. Mn(2+) serves as cofactor.

It localises to the cytoplasm. It carries out the reaction acetate + ATP = acetyl phosphate + ADP. The protein operates within metabolic intermediate biosynthesis; acetyl-CoA biosynthesis; acetyl-CoA from acetate: step 1/2. Its function is as follows. Catalyzes the formation of acetyl phosphate from acetate and ATP. Can also catalyze the reverse reaction. This is Acetate kinase from Actinobacillus pleuropneumoniae serotype 5b (strain L20).